The chain runs to 717 residues: Transport/processing ATP-binding protein ComA (717 aa).

The region spanning 11 to 138 is the Peptidase C39 domain; that stretch reads QVDQMDCGVA…EEWTGVTLFM (128 aa). The active site involves Cys17. Transmembrane regions (helical) follow at residues 18 to 38, 166 to 186, 205 to 225, 237 to 257, 281 to 301, 306 to 326, and 397 to 417; these read GVASLAMVFGYYGSYYFLAHL, GLIANIVLATLLVTVINIVGS, LGIISIGLVIVYILQQILSYA, LSIDVILSYIKHVFHLPMSFF, STILSIFLDVSTVVIISLVLF, NLFFMTLLALPIYTVIIFAFM, and VAHLLLNVGILWMGAVLVMDG. Positions 168–450 constitute an ABC transmembrane type-1 domain; the sequence is IANIVLATLL…IINLQTKLQT (283 aa). The region spanning 484–717 is the ABC transporter domain; sequence MTFKQVHYKY…GGFYAHLVNS (234 aa). 517 to 524 provides a ligand contact to ATP; the sequence is GISGSGKT.

Belongs to the ABC transporter superfamily. HlyB family.

It localises to the cell membrane. Required for induction of competence. Seems to transport the competence-stimulating peptide (CSP). This chain is Transport/processing ATP-binding protein ComA (comA), found in Streptococcus pneumoniae (strain ATCC BAA-255 / R6).